Reading from the N-terminus, the 271-residue chain is RxLR effector protein PITG_15679 (271 aa).

The N-terminal stretch at 1–18 is a signal peptide; the sequence is MKVLQLIALTALVSSCVA. The RxLR-dEER signature appears at 49–69; it reads RSLRRYDLEGLDSVNSNREER. The Nudix hydrolase domain occupies 212–271; it reads RLLSANVVMRLNDKGEKQILLISSSNPKKGDFLLPKGGWDKGEDVKKAALREVIEEGGVR. The short motif at 248 to 269 is the Nudix box element; that stretch reads GGWDKGEDVKKAALREVIEEGG.

In the N-terminal section; belongs to the RxLR effector family. It in the C-terminal section; belongs to the Nudix hydrolase family.

It localises to the secreted. Its subcellular location is the host cytoplasm. The protein resides in the host nucleus. Its function is as follows. Effector that enhances P.infestans colonization of Nicotiana benthamiana leaves. This Phytophthora infestans (strain T30-4) (Potato late blight agent) protein is RxLR effector protein PITG_15679.